Reading from the N-terminus, the 266-residue chain is 5'-nucleotidase SurE (266 aa).

Positions 8, 9, 39, and 95 each coordinate a divalent metal cation.

The protein belongs to the SurE nucleotidase family. It depends on a divalent metal cation as a cofactor.

It localises to the cytoplasm. The catalysed reaction is a ribonucleoside 5'-phosphate + H2O = a ribonucleoside + phosphate. In terms of biological role, nucleotidase that shows phosphatase activity on nucleoside 5'-monophosphates. The sequence is that of 5'-nucleotidase SurE from Syntrophus aciditrophicus (strain SB).